Reading from the N-terminus, the 120-residue chain is Large ribosomal subunit protein uL18 (120 aa).

It belongs to the universal ribosomal protein uL18 family. Part of the 50S ribosomal subunit; part of the 5S rRNA/L5/L18/L25 subcomplex. Contacts the 5S and 23S rRNAs.

This is one of the proteins that bind and probably mediate the attachment of the 5S RNA into the large ribosomal subunit, where it forms part of the central protuberance. In Rhodopseudomonas palustris (strain BisB5), this protein is Large ribosomal subunit protein uL18.